We begin with the raw amino-acid sequence, 987 residues long: Transposase for transposon Tn4430 (987 aa).

This sequence belongs to the transposase 7 family.

Functionally, required for transposition of transposon Tn4430. This chain is Transposase for transposon Tn4430 (tnpA), found in Bacillus thuringiensis.